Reading from the N-terminus, the 199-residue chain is GTP cyclohydrolase-2 (199 aa).

Position 49 to 53 (49 to 53) interacts with GTP; sequence RIHSE. The Zn(2+) site is built by cysteine 54, cysteine 65, and cysteine 67. GTP is bound by residues glutamine 70, 92 to 94, and threonine 114; that span reads EGR. Catalysis depends on aspartate 126, which acts as the Proton acceptor. Residue arginine 128 is the Nucleophile of the active site. GTP-binding residues include threonine 149 and lysine 154.

Belongs to the GTP cyclohydrolase II family. Homodimer. Zn(2+) is required as a cofactor.

The enzyme catalyses GTP + 4 H2O = 2,5-diamino-6-hydroxy-4-(5-phosphoribosylamino)-pyrimidine + formate + 2 phosphate + 3 H(+). The protein operates within cofactor biosynthesis; riboflavin biosynthesis; 5-amino-6-(D-ribitylamino)uracil from GTP: step 1/4. Its function is as follows. Catalyzes the conversion of GTP to 2,5-diamino-6-ribosylamino-4(3H)-pyrimidinone 5'-phosphate (DARP), formate and pyrophosphate. This Blochmanniella floridana protein is GTP cyclohydrolase-2.